The chain runs to 244 residues: Thiol S-methyltransferase TMT1A (244 aa).

The interval 1–28 (MELTIFILRLAIYILTFPLYLLNFLGLW) is targeting to lipid droplets. Positions 1–29 (MELTIFILRLAIYILTFPLYLLNFLGLWS) are cleaved as a signal peptide.

It belongs to the methyltransferase superfamily. (Microbial infection) Interacts with HCV non-structural protein 4B/NS4B (via C-terminal region); this interaction may promote the recruitment of NS4B in the proximity of lipid droplet. As to quaternary structure, self-associates. Interacts with SNRNP200; this interaction may promote the odontogenic differentiation. Methylated at lysine residues most likely by EZH2. In terms of tissue distribution, expressed in the liver.

It localises to the lipid droplet. The protein localises to the endoplasmic reticulum. The protein resides in the membrane. Its subcellular location is the microsome. It is found in the cytoplasm. It localises to the cytosol. It carries out the reaction a thiol + S-adenosyl-L-methionine = a methyl thioether + S-adenosyl-L-homocysteine + H(+). The enzyme catalyses an adenosine in mRNA + S-adenosyl-L-methionine = an N(6)-methyladenosine in mRNA + S-adenosyl-L-homocysteine + H(+). Inhibited by 2,3-dichloro-alpha-methylbenzylamine (DCMB). Functionally, thiol S-methyltransferase that catalyzes the transfer of a methyl group from S-adenosyl-L-methionine to alkyl and phenolic thiol-containing acceptor substrates. Together with TMT1B accounts for most of S-thiol methylation activity in the endoplasmic reticulum of hepatocytes. Able to methylate the N6 position of adenosine residues in long non-coding RNAs (lncRNAs). May facilitate lncRNAs transfer into exosomes at the tumor-stroma interface. Promotes osteogenic and odontogenic differentiation by regulating the expression of genes involved in stem cell differentiation and survival. Targeted from the endoplasmic reticulum to lipid droplets, where it recruits cellular proteins to form functional organelles. In terms of biological role, (Microbial infection) May be involved in the assembly and release stages of hepatitis C virus (HCV) life cycle and thus play a crucial role in HCV propagation. This is Thiol S-methyltransferase TMT1A from Homo sapiens (Human).